The sequence spans 475 residues: Ribulose bisphosphate carboxylase large chain (475 aa).

The propeptide occupies Met1 to Ser2. An N-acetylproline modification is found at Pro3. Lys14 bears the N6,N6,N6-trimethyllysine mark. Substrate contacts are provided by Asn123 and Thr173. Lys175 serves as the catalytic Proton acceptor. Lys177 provides a ligand contact to substrate. Lys201, Asp203, and Glu204 together coordinate Mg(2+). Lys201 is subject to N6-carboxylysine. The Proton acceptor role is filled by His294. Substrate contacts are provided by Arg295, His327, and Ser379.

It belongs to the RuBisCO large chain family. Type I subfamily. Heterohexadecamer of 8 large chains and 8 small chains; disulfide-linked. The disulfide link is formed within the large subunit homodimers. The cofactor is Mg(2+). Post-translationally, the disulfide bond which can form in the large chain dimeric partners within the hexadecamer appears to be associated with oxidative stress and protein turnover.

The protein localises to the plastid. It is found in the chloroplast. The enzyme catalyses 2 (2R)-3-phosphoglycerate + 2 H(+) = D-ribulose 1,5-bisphosphate + CO2 + H2O. It catalyses the reaction D-ribulose 1,5-bisphosphate + O2 = 2-phosphoglycolate + (2R)-3-phosphoglycerate + 2 H(+). RuBisCO catalyzes two reactions: the carboxylation of D-ribulose 1,5-bisphosphate, the primary event in carbon dioxide fixation, as well as the oxidative fragmentation of the pentose substrate in the photorespiration process. Both reactions occur simultaneously and in competition at the same active site. The protein is Ribulose bisphosphate carboxylase large chain of Gossypium hirsutum (Upland cotton).